Reading from the N-terminus, the 468-residue chain is Na(+)/H(+) antiporter NhaA (468 aa).

Transmembrane regions (helical) follow at residues 32-52 (FLHIEAVSGIVLLAAAGIALL), 83-103 (LHFWINDALMTIFFLVVGMEI), 119-139 (ALPMAAALGGVIVPALIYLAI), 148-168 (GWAVPTATDIAFAVGVLALLG), 178-198 (FLLALAIIDDIVAVLIIAVAF), 205-225 (GGFLVAGTGILMVLGLQWIGV), 320-340 (ALHPWVAYLVMPLFALANAGV), 354-374 (GAMFGVVLALVVGKPLGIVSV), 397-417 (LVGLLAGIGFTMSIFIATLAF), and 428-448 (LGVLLASAIAATIGLTWGFIY).

It belongs to the NhaA Na(+)/H(+) (TC 2.A.33) antiporter family.

Its subcellular location is the cell inner membrane. It catalyses the reaction Na(+)(in) + 2 H(+)(out) = Na(+)(out) + 2 H(+)(in). Na(+)/H(+) antiporter that extrudes sodium in exchange for external protons. This chain is Na(+)/H(+) antiporter NhaA, found in Cupriavidus necator (strain ATCC 17699 / DSM 428 / KCTC 22496 / NCIMB 10442 / H16 / Stanier 337) (Ralstonia eutropha).